A 142-amino-acid polypeptide reads, in one-letter code: Large ribosomal subunit protein uL13 (142 aa).

It belongs to the universal ribosomal protein uL13 family. As to quaternary structure, part of the 50S ribosomal subunit.

Functionally, this protein is one of the early assembly proteins of the 50S ribosomal subunit, although it is not seen to bind rRNA by itself. It is important during the early stages of 50S assembly. In Leptothrix cholodnii (strain ATCC 51168 / LMG 8142 / SP-6) (Leptothrix discophora (strain SP-6)), this protein is Large ribosomal subunit protein uL13.